Here is a 31-residue protein sequence, read N- to C-terminus: Conserved oligomeric Golgi complex subunit 5 (31 aa).

It belongs to the COG5 family. As to quaternary structure, component of the conserved oligomeric Golgi complex which is composed of eight different subunits and is required for normal Golgi morphology and localization.

It localises to the cytoplasm. The protein localises to the cytosol. It is found in the golgi apparatus membrane. Functionally, required for normal Golgi function. The protein is Conserved oligomeric Golgi complex subunit 5 (COG5) of Bos taurus (Bovine).